The following is a 427-amino-acid chain: MSAIVDIVGREILDSRGNPTVECDVLLESGTMGRAAVPSGASTGSREAIELRDGDKKRYLGKGVLKAVENINTEISESVLGLDASEQAFLDRTMIDLDGTDNKGRLGANATLAVSMAVARAAAEESGLPLYRYFGGMGGMQLPVPMMNVINGGAHANNSLDLQEFMIIPVGAPSFREAVRYGAEVFHALKKILGDRGISTAVGDEGGFAPSVESHEAAIQLILEAIDKAGFVAGEQIALGLDCAASEFYKDGNYVLSGENLTLSAGNWADMLATWVDKYPIISIEDGMHEGDWDGWKLLTERLGKRVQLVGDDLFVTNTKILQEGIDKGIANSILIKINQIGTLTETFAAIEMAKRAGYTAVISHRSGETEDSTIADIAVGTNAGQIKTGSLSRSDRIAKYNQLLRIEEDLGDIASYPGRGAFYNLK.

Q163 provides a ligand contact to (2R)-2-phosphoglycerate. E205 acts as the Proton donor in catalysis. Mg(2+)-binding residues include D242, E285, and D312. The (2R)-2-phosphoglycerate site is built by K337, R366, S367, and K388. Residue K337 is the Proton acceptor of the active site.

It belongs to the enolase family. The cofactor is Mg(2+).

It localises to the cytoplasm. It is found in the secreted. The protein resides in the cell surface. The catalysed reaction is (2R)-2-phosphoglycerate = phosphoenolpyruvate + H2O. Its pathway is carbohydrate degradation; glycolysis; pyruvate from D-glyceraldehyde 3-phosphate: step 4/5. Its function is as follows. Catalyzes the reversible conversion of 2-phosphoglycerate (2-PG) into phosphoenolpyruvate (PEP). It is essential for the degradation of carbohydrates via glycolysis. The polypeptide is Enolase (Variovorax paradoxus (strain S110)).